A 292-amino-acid chain; its full sequence is Large ribosomal subunit protein bL19m (292 aa).

A disordered region spans residues 39–68; sequence GPGRRQITGPSEPGVFQPPPKPVIVDKRGP. Ser-77 carries the phosphoserine modification.

Belongs to the bacterial ribosomal protein bL19 family. As to quaternary structure, component of the mitochondrial ribosome large subunit (39S) which comprises a 16S rRNA and about 50 distinct proteins.

The protein resides in the mitochondrion. The polypeptide is Large ribosomal subunit protein bL19m (MRPL19) (Bos taurus (Bovine)).